The primary structure comprises 89 residues: Small ribosomal subunit protein uS17 (89 aa).

This sequence belongs to the universal ribosomal protein uS17 family. In terms of assembly, part of the 30S ribosomal subunit.

One of the primary rRNA binding proteins, it binds specifically to the 5'-end of 16S ribosomal RNA. The chain is Small ribosomal subunit protein uS17 from Xanthomonas campestris pv. campestris (strain B100).